The following is an 839-amino-acid chain: Heat shock 70 kDa protein 4L (839 aa).

A phosphoserine mark is found at Ser-74 and Ser-508. Residues 503-554 (LEGDHSDAPMETETSFKNENKDNMDKMQVDQEEGHQKCHAEHTPEEEIDHTG) are compositionally biased toward basic and acidic residues. A disordered region spans residues 503-567 (LEGDHSDAPM…KSAVSDKQDR (65 aa)). Thr-545 bears the Phosphothreonine mark. Phosphoserine is present on Ser-579. Phosphothreonine is present on Thr-761. Positions 786 to 839 (IYKPKPKAEVPEDKPKANSEHNGPMDGQSGTETKSDSTKDSSQHTKSSGEMEVD) are disordered. Composition is skewed to basic and acidic residues over residues 791 to 804 (PKAE…KANS) and 818 to 839 (TKSD…MEVD).

It belongs to the heat shock protein 70 family. In terms of assembly, homodimer.

Its subcellular location is the cytoplasm. It localises to the nucleus. Its function is as follows. Possesses chaperone activity in vitro where it inhibits aggregation of citrate synthase. This is Heat shock 70 kDa protein 4L (HSPA4L) from Homo sapiens (Human).